Reading from the N-terminus, the 95-residue chain is MGKGTGSFGKRRNKSHTLCVRCGRRSFHIQKSRCSACAYPAARKRTYNWSVKAIRRKTTGTGRMRYLRNVPRRFKTCFREGTQATPRNKAAASSS.

Residues Cys-19, Cys-22, Cys-34, and Cys-37 each coordinate Zn(2+). A C4-type zinc finger spans residues 19-37 (CVRCGRRSFHIQKSRCSAC).

This sequence belongs to the eukaryotic ribosomal protein eL37 family. Requires Zn(2+) as cofactor.

Functionally, binds to the 23S rRNA. This chain is Large ribosomal subunit protein eL37z (RPL37A), found in Arabidopsis thaliana (Mouse-ear cress).